Here is a 217-residue protein sequence, read N- to C-terminus: ATP phosphoribosyltransferase (217 aa).

This sequence belongs to the ATP phosphoribosyltransferase family. Short subfamily. Heteromultimer composed of HisG and HisZ subunits.

It is found in the cytoplasm. It catalyses the reaction 1-(5-phospho-beta-D-ribosyl)-ATP + diphosphate = 5-phospho-alpha-D-ribose 1-diphosphate + ATP. Its pathway is amino-acid biosynthesis; L-histidine biosynthesis; L-histidine from 5-phospho-alpha-D-ribose 1-diphosphate: step 1/9. In terms of biological role, catalyzes the condensation of ATP and 5-phosphoribose 1-diphosphate to form N'-(5'-phosphoribosyl)-ATP (PR-ATP). Has a crucial role in the pathway because the rate of histidine biosynthesis seems to be controlled primarily by regulation of HisG enzymatic activity. This Polaromonas naphthalenivorans (strain CJ2) protein is ATP phosphoribosyltransferase.